Here is a 485-residue protein sequence, read N- to C-terminus: ATP-dependent 6-phosphofructokinase (485 aa).

ATP is bound by residues G105, 171–172 (RG), and 196–199 (GDGT). D197 provides a ligand contact to Mg(2+). Substrate contacts are provided by residues 225–227 (TID), 270–272 (MGR), E323, and 378–381 (YMIR). Residue D227 is the Proton acceptor of the active site. A Peroxisomal targeting signal motif is present at residues 483-485 (SKL).

It belongs to the phosphofructokinase type A (PFKA) family. PPi-dependent PFK group II subfamily. Atypical ATP-dependent clade 'X' sub-subfamily. In terms of assembly, homotetramer. Requires Mg(2+) as cofactor.

The protein localises to the glycosome. It carries out the reaction beta-D-fructose 6-phosphate + ATP = beta-D-fructose 1,6-bisphosphate + ADP + H(+). It participates in carbohydrate degradation; glycolysis; D-glyceraldehyde 3-phosphate and glycerone phosphate from D-glucose: step 3/4. With respect to regulation, allosterically activated by AMP. In terms of biological role, catalyzes the phosphorylation of D-fructose 6-phosphate to fructose 1,6-bisphosphate by ATP, the first committing step of glycolysis. In Trypanosoma cruzi (strain CL Brener), this protein is ATP-dependent 6-phosphofructokinase.